The primary structure comprises 233 residues: Small ribosomal subunit protein uS3 (233 aa).

The KH type-2 domain maps to 39–108 (IRTALFKLLK…KLIVNVRVIE (70 aa)).

It belongs to the universal ribosomal protein uS3 family. As to quaternary structure, part of the 30S ribosomal subunit. Forms a tight complex with proteins S10 and S14.

Functionally, binds the lower part of the 30S subunit head. Binds mRNA in the 70S ribosome, positioning it for translation. In Mycoplasma mycoides subsp. mycoides SC (strain CCUG 32753 / NCTC 10114 / PG1), this protein is Small ribosomal subunit protein uS3.